A 360-amino-acid polypeptide reads, in one-letter code: Peptide chain release factor 1 (360 aa).

Position 235 is an N5-methylglutamine (glutamine 235).

This sequence belongs to the prokaryotic/mitochondrial release factor family. Post-translationally, methylated by PrmC. Methylation increases the termination efficiency of RF1.

Its subcellular location is the cytoplasm. Peptide chain release factor 1 directs the termination of translation in response to the peptide chain termination codons UAG and UAA. The chain is Peptide chain release factor 1 from Paracidovorax citrulli (strain AAC00-1) (Acidovorax citrulli).